Consider the following 280-residue polypeptide: Diaminopimelate epimerase (280 aa).

Substrate contacts are provided by Asn-13 and Asn-66. Cys-75 serves as the catalytic Proton donor. Residues 76-77 (GN), Asn-162, Asn-195, and 213-214 (ER) contribute to the substrate site. Cys-222 serves as the catalytic Proton acceptor. 223–224 (GT) is a substrate binding site.

The protein belongs to the diaminopimelate epimerase family. Homodimer.

It localises to the cytoplasm. The catalysed reaction is (2S,6S)-2,6-diaminopimelate = meso-2,6-diaminopimelate. It functions in the pathway amino-acid biosynthesis; L-lysine biosynthesis via DAP pathway; DL-2,6-diaminopimelate from LL-2,6-diaminopimelate: step 1/1. Its function is as follows. Catalyzes the stereoinversion of LL-2,6-diaminopimelate (L,L-DAP) to meso-diaminopimelate (meso-DAP), a precursor of L-lysine and an essential component of the bacterial peptidoglycan. The protein is Diaminopimelate epimerase of Synechococcus elongatus (strain ATCC 33912 / PCC 7942 / FACHB-805) (Anacystis nidulans R2).